A 510-amino-acid polypeptide reads, in one-letter code: NAD(P)H-quinone oxidoreductase subunit 2 B, chloroplastic (510 aa).

14 consecutive transmembrane segments (helical) span residues 24–44 (LLLF…GLIL), 59–79 (WFYF…LFRW), 99–119 (IFQF…VEYI), 124–144 (MAIT…MFLC), 149–169 (LITI…LSGY), 184–204 (LLMG…LYGL), 229–249 (ISIA…LAPF), 261–281 (PTPV…ALAT), 295–315 (WHLL…LLAI), 323–343 (MLAY…IVGD), 354–374 (YMLF…LFGL), 395–415 (ALSL…AGFF), 418–438 (LYLF…IGLL), and 484–504 (MTVC…ILAI).

Belongs to the complex I subunit 2 family. In terms of assembly, NDH is composed of at least 16 different subunits, 5 of which are encoded in the nucleus.

The protein localises to the plastid. It localises to the chloroplast thylakoid membrane. The catalysed reaction is a plastoquinone + NADH + (n+1) H(+)(in) = a plastoquinol + NAD(+) + n H(+)(out). It carries out the reaction a plastoquinone + NADPH + (n+1) H(+)(in) = a plastoquinol + NADP(+) + n H(+)(out). NDH shuttles electrons from NAD(P)H:plastoquinone, via FMN and iron-sulfur (Fe-S) centers, to quinones in the photosynthetic chain and possibly in a chloroplast respiratory chain. The immediate electron acceptor for the enzyme in this species is believed to be plastoquinone. Couples the redox reaction to proton translocation, and thus conserves the redox energy in a proton gradient. This chain is NAD(P)H-quinone oxidoreductase subunit 2 B, chloroplastic, found in Zea mays (Maize).